Here is an 85-residue protein sequence, read N- to C-terminus: Large ribosomal subunit protein bL27 (85 aa).

The disordered stretch occupies residues M1–L21.

This sequence belongs to the bacterial ribosomal protein bL27 family.

The sequence is that of Large ribosomal subunit protein bL27 from Pseudomonas entomophila (strain L48).